The sequence spans 22 residues: Peptide PGLa-R1 (22 aa).

At leucine 22 the chain carries Leucine amide.

As to expression, expressed by the skin glands.

The protein localises to the secreted. In terms of biological role, antimicrobial peptide. The chain is Peptide PGLa-R1 from Xenopus ruwenzoriensis (Uganda clawed frog).